The following is a 143-amino-acid chain: Transcriptional regulator MraZ (143 aa).

SpoVT-AbrB domains lie at 5–47 and 76–119; these read EYQH…PKDE and AIES…SKDN.

Belongs to the MraZ family. Forms oligomers.

The protein resides in the cytoplasm. It localises to the nucleoid. In Oenococcus oeni (strain ATCC BAA-331 / PSU-1), this protein is Transcriptional regulator MraZ.